A 113-amino-acid polypeptide reads, in one-letter code: Beta-microseminoprotein A1 (113 aa).

The first 20 residues, 1-20, serve as a signal peptide directing secretion; the sequence is MNVLLGGLVIFATFVTLCNG. 5 disulfide bridges follow: Cys22/Cys70, Cys38/Cys62, Cys57/Cys93, Cys60/Cys69, and Cys84/Cys107.

Belongs to the beta-microseminoprotein family.

It is found in the secreted. The polypeptide is Beta-microseminoprotein A1 (MSPA) (Saguinus oedipus (Cotton-top tamarin)).